The chain runs to 271 residues: Eukaryotic translation initiation factor 3 subunit G (271 aa).

Disordered stretches follow at residues 1–26 (MSTT…TNPD), 63–119 (AQRK…AQKL), and 147–187 (TTSS…RDDS). A Phosphoserine modification is found at S77. The RRM domain maps to 188–267 (TTLKVSQLNS…LILHLEWSKK (80 aa)).

It belongs to the eIF-3 subunit G family. In terms of assembly, component of the eukaryotic translation initiation factor 3 (eIF-3) complex.

It is found in the cytoplasm. Its function is as follows. RNA-binding component of the eukaryotic translation initiation factor 3 (eIF-3) complex, which is involved in protein synthesis of a specialized repertoire of mRNAs and, together with other initiation factors, stimulates binding of mRNA and methionyl-tRNAi to the 40S ribosome. The eIF-3 complex specifically targets and initiates translation of a subset of mRNAs involved in cell proliferation. This subunit can bind 18S rRNA. The protein is Eukaryotic translation initiation factor 3 subunit G of Scheffersomyces stipitis (strain ATCC 58785 / CBS 6054 / NBRC 10063 / NRRL Y-11545) (Yeast).